Reading from the N-terminus, the 430-residue chain is Maintenance of mitochondrial morphology protein 1 (430 aa).

The Lumenal segment spans residues 1 to 70 (MSQGLIETTT…NGNTWSFTQG (70 aa)). A helical membrane pass occupies residues 71–91 (LVIGQISVIFIIIVFVKFFVF). Residues 92–430 (ADSSSHIPTK…TPGEFVNSNI (339 aa)) lie on the Cytoplasmic side of the membrane. Residues 159-387 (ASESLDWFNV…EPRFQVVRLP (229 aa)) form the SMP-LTD domain. Residues 305 to 326 (GYSKENGSADSASDNDEDEDDG) form a disordered region. Residues 317–326 (SDNDEDEDDG) are compositionally biased toward acidic residues.

The protein belongs to the MMM1 family. In terms of assembly, homodimer. Component of the ER-mitochondria encounter structure (ERMES) or MDM complex, composed of MMM1, MDM10, MDM12 and MDM34. An MMM1 homodimer associates with one molecule of MDM12 on each side in a pairwise head-to-tail manner, and the SMP-LTD domains of MMM1 and MDM12 generate a continuous hydrophobic tunnel for phospholipid trafficking.

It localises to the endoplasmic reticulum membrane. Its function is as follows. Component of the ERMES/MDM complex, which serves as a molecular tether to connect the endoplasmic reticulum (ER) and mitochondria. Components of this complex are involved in the control of mitochondrial shape and protein biogenesis, and function in nonvesicular lipid trafficking between the ER and mitochondria. The MDM12-MMM1 subcomplex functions in the major beta-barrel assembly pathway that is responsible for biogenesis of all outer membrane beta-barrel proteins, and acts in a late step after the SAM complex. The MDM10-MDM12-MMM1 subcomplex further acts in the TOM40-specific pathway after the action of the MDM12-MMM1 complex. Essential for establishing and maintaining the structure of mitochondria and maintenance of mtDNA nucleoids. This chain is Maintenance of mitochondrial morphology protein 1, found in Candida dubliniensis (strain CD36 / ATCC MYA-646 / CBS 7987 / NCPF 3949 / NRRL Y-17841) (Yeast).